The sequence spans 404 residues: Putative nitronate monooxygenase (404 aa).

41–43 (PMA) provides a ligand contact to FMN. His224 functions as the Proton acceptor in the catalytic mechanism. Residue His224 participates in substrate binding. Residues 270–272 (AGG) and 293–294 (GT) each bind FMN.

Belongs to the nitronate monooxygenase family. NMO class I subfamily. FMN serves as cofactor.

It is found in the cytoplasm. The catalysed reaction is ethylnitronate + O2 = chemical entity + acetaldehyde + nitrite + H(+). Its function is as follows. Catalyzes the oxidation of alkyl nitronates to produce the corresponding carbonyl compounds and nitrites. The sequence is that of Putative nitronate monooxygenase from Saccharomyces cerevisiae (strain ATCC 204508 / S288c) (Baker's yeast).